The sequence spans 266 residues: Chymotrypsin-like elastase family member 1 (266 aa).

Residues 1 to 16 form the signal peptide; the sequence is MLRFLVFASLVLYGHS. A propeptide spans 17–26 (activation peptide); that stretch reads TQDFPETNAR. The Peptidase S1 domain maps to 27–264; that stretch reads VVGGAEARRN…YISWMNNVIA (238 aa). Residues Cys-56 and Cys-72 are joined by a disulfide bond. His-71 serves as the catalytic Charge relay system. The Ca(2+) site is built by Asp-85, Asn-87, Gln-90, and Glu-95. Asp-119 acts as the Charge relay system in catalysis. Intrachain disulfides connect Cys-153–Cys-220, Cys-184–Cys-200, and Cys-210–Cys-240. Ser-214 (charge relay system) is an active-site residue.

It belongs to the peptidase S1 family. Elastase subfamily. Requires Ca(2+) as cofactor. As to expression, pancreas.

The protein localises to the secreted. The enzyme catalyses Hydrolysis of proteins, including elastin. Preferential cleavage: Ala-|-Xaa.. In terms of biological role, serine proteases that hydrolyze many proteins in addition to elastin. This is Chymotrypsin-like elastase family member 1 (Cela1) from Rattus norvegicus (Rat).